The sequence spans 501 residues: Ribose import ATP-binding protein RbsA (501 aa).

ABC transporter domains follow at residues 5–241 (LQLK…VGRK) and 252–495 (APGE…VGKL). Residue 37-44 (GENGAGKS) participates in ATP binding.

This sequence belongs to the ABC transporter superfamily. Ribose importer (TC 3.A.1.2.1) family. The complex is composed of an ATP-binding protein (RbsA), two transmembrane proteins (RbsC) and a solute-binding protein (RbsB).

It is found in the cell inner membrane. It catalyses the reaction D-ribose(out) + ATP + H2O = D-ribose(in) + ADP + phosphate + H(+). Functionally, part of the ABC transporter complex RbsABC involved in ribose import. Responsible for energy coupling to the transport system. In Salmonella typhimurium (strain LT2 / SGSC1412 / ATCC 700720), this protein is Ribose import ATP-binding protein RbsA.